The primary structure comprises 329 residues: Ribosomal RNA small subunit methyltransferase C (329 aa).

The protein belongs to the methyltransferase superfamily. RsmC family. Monomer.

The protein resides in the cytoplasm. It carries out the reaction guanosine(1207) in 16S rRNA + S-adenosyl-L-methionine = N(2)-methylguanosine(1207) in 16S rRNA + S-adenosyl-L-homocysteine + H(+). Functionally, specifically methylates the guanine in position 1207 of 16S rRNA in the 30S particle. This Haemophilus ducreyi (strain 35000HP / ATCC 700724) protein is Ribosomal RNA small subunit methyltransferase C.